Consider the following 1215-residue polypeptide: Protein benign gonial cell neoplasm (1215 aa).

One copy of the ANK repeat lies at 407–439 (TGKTAVHFASELNKANHLRLLLFMGADPYIVDL). Thr898 carries the phosphothreonine modification.

In terms of assembly, part of a complex composed of at least mei-P26, bam, bgcn and Sxl; this complex is involved in translational repression of nanos mRNA. Interacts with bam (via C-terminus); the interaction is direct. Interacts with mei-P26; the interaction is direct and does not require bam. Weakly interacts with wh/wuho; this interaction may be required for the function or formation of the mei-P26-bgcn-bam-Sxl complex. Part of a complex composed of at least tut, bam and bgcn; complex formation does not require RNA. Interacts with tut; the interaction is indirect and is mediated by bam. As part of the bam-bgcn-tut complex associates with twin; may recruit the CCR4-NOT1 deadenylation complex to mRNA 3'UTRs to mediate post-transcriptional regulation of expression. As to expression, expressed in testis and in 5-8 germline stem cells of ovaries, immediately adjacent to terminal filament. Expressed in ovarian germline cells throughout the germarium (at protein level).

Forms a complex with tut and bam involved in 3'UTR-dependent post-transcriptional repression of several 3'-RNA processing factors, which promotes germline stem cell lineage differentiation and mitosis-to-meiosis transition. Part of a complex with bam involved in 3'-UTR-dependent translational repression of a subset of mRNAs, including those for mei-P26, nanos and shg/E-cadherin; may act as a promiscuous RNA-binding protein tethering bam to its target mRNAs. Required for regulating the progression of gonialblast cells through transit amplification and differentiation into gametes. The polypeptide is Protein benign gonial cell neoplasm (Drosophila melanogaster (Fruit fly)).